A 272-amino-acid chain; its full sequence is MIINHNLPAMNAHRNMGINLNQGQKAMEKLSSGLRINRAGDDAAGLAISEKMRAQIRGLDQASRNSQDGISLIQTAEGALDEVHSILQRMRELAVQSSNETNVEQDQAALNDEFQQLVEEIERIKDTTQFNTQKLLDDTVDTVQLQVGANSGELIELDLTKVDLSAIHTALAAEDITDHTNAQSAIDAIDEQLKAVSEGRSYLGAMQNRLEHTIKNLDNASENLQAAESRIRDVDMAKEMMEFTRTNILNQASQAMLAQANQQPQAVLQLLR.

It belongs to the bacterial flagellin family.

The protein localises to the secreted. Its subcellular location is the bacterial flagellum. Functionally, flagellin is the subunit protein which polymerizes to form the filaments of bacterial flagella. The chain is Flagellin (hag) from Halalkalibacterium halodurans (strain ATCC BAA-125 / DSM 18197 / FERM 7344 / JCM 9153 / C-125) (Bacillus halodurans).